The primary structure comprises 467 residues: Transcription factor fos-1 (467 aa).

The segment covering 1–22 (MFEQPSSTTNTTTSSGSGSDSN) has biased composition (low complexity). 2 disordered regions span residues 1–38 (MFEQ…QAHP) and 139–179 (QYST…AAAR). The region spanning 163 to 226 (DDKRLKRRQR…NSLKNYLETH (64 aa)) is the bZIP domain. The tract at residues 165–205 (KRLKRRQRNKEAAARCRQRRIDLMKELQDQVNDFKNSNDKK) is basic motif. The interval 212 to 219 (IRNKLNSL) is leucine-zipper. Disordered regions lie at residues 266 to 291 (RADS…PVED) and 395 to 467 (QPIT…LRPL). Residues 273–286 (SIRSGHSSSSSEQH) are compositionally biased toward low complexity. The segment covering 434 to 454 (SSNTGLTPSGQPTMNFVSTPT) has biased composition (polar residues). 3 positions are modified to phosphothreonine: Thr-440, Thr-452, and Thr-454.

Belongs to the bZIP family. Fos subfamily. Homodimer. Heterodimer; with jun-1. Interacts with kgb-1 and hda-1. In terms of processing, may be phosphorylated by kgb-1. Phosphorylation at Thr-440 increases sensitivity to heavy metal stress. Phosphorylation inhibits homodimer formation, and promotes association with target promoters. Expressed in anchor cells. Isoform a is expressed in somatic gonad cells that neighbor anchor cells. Isoform b is expressed in vulval cells, the uterine cells that neighbor anchor cells and the spermatheca.

The protein localises to the nucleus. Developmentally regulated transcription factor which binds and recognizes the enhancer DNA sequence 5'-TGA[CG]TCA-3'. In terms of biological role, plays a role the development of the reproductive system, controlling events including anchor cell (AC) fusion and invasion. Regulates downstream transcriptional targets, including zmp-1, cdh-3, him-4 and mig10b, to promote the removal of the gonadal basement membrane during AC invasion. Regulates aff-1 expression to promote AC fusion. With jun-1 regulates egl-1 and lin-12 expression to allow uterine cell specification and development. Its function is as follows. Required for ovulation. Controls plc-1 expression in the spermatheca to regulate spermathecal valve dilation. Acts with hda-1 as a downstream repressor of the kgb-1 mediated stress response pathway that transcriptionally represses genes involved in the response to heavy metals, such as kreg-1. This Caenorhabditis elegans protein is Transcription factor fos-1.